The primary structure comprises 162 residues: Cyclic pyranopterin monophosphate synthase (162 aa).

Substrate-binding positions include L79 to H81 and M117 to E118. D132 is a catalytic residue.

Belongs to the MoaC family. As to quaternary structure, homohexamer; trimer of dimers.

It carries out the reaction (8S)-3',8-cyclo-7,8-dihydroguanosine 5'-triphosphate = cyclic pyranopterin phosphate + diphosphate. It participates in cofactor biosynthesis; molybdopterin biosynthesis. Functionally, catalyzes the conversion of (8S)-3',8-cyclo-7,8-dihydroguanosine 5'-triphosphate to cyclic pyranopterin monophosphate (cPMP). The protein is Cyclic pyranopterin monophosphate synthase of Bordetella avium (strain 197N).